Reading from the N-terminus, the 117-residue chain is Probable prefoldin subunit 1 (117 aa).

The protein belongs to the prefoldin subunit beta family. As to quaternary structure, heterohexamer of two PFD-alpha type and four PFD-beta type subunits. In terms of tissue distribution, expressed in the distal cell tip of developing embryos.

Its subcellular location is the cytoplasm. Its function is as follows. Binds specifically to cytosolic chaperonin (c-CPN) and transfers target proteins to it. Binds to nascent polypeptide chain and promotes folding in an environment in which there are many competing pathways for nonnative proteins. Has a role in gonadogenesis. This Caenorhabditis elegans protein is Probable prefoldin subunit 1 (pfd-1).